The chain runs to 568 residues: MNTEILGVVAQVALMVILAYPLGRYIAKVYKGEKTWSDFMAPIERVIYKVCGIDPKEEMNWKQFLKALLILNAFWFVWGMVLLVSQGWLPLNPDGNGPQTPDQAFNTCISFMVNCNLQHYSGESGLTYFTQLFVIMLFQFITAATGMAAMAGIMKSMAAKTTKTIGNFWHFLVVSCTRILLPLSLIVGFILILQGTPMGFDGKMKVTTLEGQEQMVSQGPAAAIVPIKQLGTNGGGYFGVNSSHPLENPTYLTNMVECWSILIIPMAMVLALGFYTRRKKLAYSIFGVMLFAFLVGVCINVSQEMGGNPRIDELGIAQDNGAMEGKEVRLGAGATALWSIVTTVTSNGSVNGMHDSTMPLSGMMEMLNMQINTWFGGVGVGWMNYYTFIIIAVFISGLMVGRTPEFLGKKVEAREMKIATIVALLHPFVILVFTAISSYIYVYHPDFVESEGGWLNNLGFHGLSEQLYEYTSCAANNGSGFEGLGDNTYFWNWTCGIVLILSRFLPIIGQVAIAGLLAQKKFIPESAGTLKTDTLTFGIMTFVVIFIVAALSFFPVHALSTIAEHLSL.

10 helical membrane passes run 3–23, 64–84, 133–153, 179–199, 255–275, 281–301, 375–395, 418–438, 497–517, and 536–556; these read TEIL…YPLG, FLKA…VLLV, FVIM…MAGI, ILLP…TPMG, MVEC…LGFY, LAYS…CINV, FGGV…AVFI, IATI…AISS, IVLI…AGLL, and TFGI…FFPV.

This sequence belongs to the KdpA family. In terms of assembly, the system is composed of three essential subunits: KdpA, KdpB and KdpC.

It is found in the cell inner membrane. Functionally, part of the high-affinity ATP-driven potassium transport (or Kdp) system, which catalyzes the hydrolysis of ATP coupled with the electrogenic transport of potassium into the cytoplasm. This subunit binds the periplasmic potassium ions and delivers the ions to the membrane domain of KdpB through an intramembrane tunnel. This is Potassium-transporting ATPase potassium-binding subunit from Bacteroides thetaiotaomicron (strain ATCC 29148 / DSM 2079 / JCM 5827 / CCUG 10774 / NCTC 10582 / VPI-5482 / E50).